Here is a 257-residue protein sequence, read N- to C-terminus: UPF0246 protein YaaA (257 aa).

It belongs to the UPF0246 family.

The sequence is that of UPF0246 protein YaaA from Salmonella typhi.